We begin with the raw amino-acid sequence, 1226 residues long: Chitin synthase IV (1226 aa).

Positions 1–205 (MSLPERPGGS…SRKNPATAEQ (205 aa)) are disordered. Residues 49-65 (SVSSYAETISNPHANTE) show a composition bias toward polar residues. Residues 66–75 (TLPLSPTHPT) are compositionally biased toward low complexity. Residues 94–107 (IRPERNRIDKDHRN) show a composition bias toward basic and acidic residues. Residues 134-151 (DVSTEPSGGSQTHGSFAD) are compositionally biased toward polar residues. A compositionally biased stretch (basic and acidic residues) spans 163–172 (MSGDDQEKGN). Residues 173–198 (TRVKSRPRRSKSGKITKETRHRKSRK) show a composition bias toward basic residues. A helical membrane pass occupies residues 246–266 (MGLISIILVIMAIVGFLTFGF). N381, N421, and N443 each carry an N-linked (GlcNAc...) asparagine glycan. A helical transmembrane segment spans residues 516 to 536 (ILILSVVGTRFVLALIFQWFI). The disordered stretch occupies residues 572–671 (LPGDVGSSAM…PGPAGFIHDS (100 aa)). Polar residues-rich tracts occupy residues 580–601 (AMGSSDRTSKRGSSFLPTTSRF) and 618–643 (TTMSSQGPASALLNPNSIYRQGNDSR). The N-linked (GlcNAc...) asparagine glycan is linked to N640. Low complexity predominate over residues 649-666 (PDPYSSAASPSDGPGPAG). Residues N787 and N1035 are each glycosylated (N-linked (GlcNAc...) asparagine). The next 3 helical transmembrane spans lie at 1060–1080 (FVVFVELVGTLVLPAAIAFTF), 1094–1114 (IIPLVLLALILGLPGLLILVT), and 1118–1138 (WSYVVWMLIYLVSLPIWNFVL).

It belongs to the chitin synthase family. Class IV subfamily. In terms of tissue distribution, highly expressed in conidia.

It localises to the cell membrane. It catalyses the reaction [(1-&gt;4)-N-acetyl-beta-D-glucosaminyl](n) + UDP-N-acetyl-alpha-D-glucosamine = [(1-&gt;4)-N-acetyl-beta-D-glucosaminyl](n+1) + UDP + H(+). In terms of biological role, polymerizes chitin, a structural polymer of the cell wall and septum, by transferring the sugar moiety of UDP-GlcNAc to the non-reducing end of the growing chitin polymer. Contributes to the production of conidia and the ability of fungal conidia to germinate. Involved in fungal stress tolerances. The sequence is that of Chitin synthase IV from Metarhizium acridum (strain CQMa 102).